The chain runs to 92 residues: Promotilin (92 aa).

The tract at residues 12 to 49 is disordered; that stretch reads RMQEKERNRGQKKSLGLQQRSEEVGSLDPTEAAEEEGK.

The protein belongs to the motilin family.

It localises to the secreted. In terms of biological role, plays an important role in the regulation of interdigestive gastrointestinal motility and indirectly causes rhythmic contraction of duodenal and colonic smooth muscle. In Equus caballus (Horse), this protein is Promotilin (MLN).